A 461-amino-acid polypeptide reads, in one-letter code: Elongation factor 1-alpha (461 aa).

The residue at position 2 (Gly2) is a N,N,N-trimethylglycine. The tr-type G domain maps to 5–242 (KIHINIVVIG…DAILPPSRPT (238 aa)). The G1 stretch occupies residues 14–21 (GHVDSGKS). 14–21 (GHVDSGKS) is a GTP binding site. Residues 70–74 (GITID) are G2. The tract at residues 91 to 94 (DAPG) is G3. Residues 153 to 156 (NKMD) and 194 to 196 (SGW) each bind GTP. Residues 153-156 (NKMD) form a G4 region. The G5 stretch occupies residues 194-196 (SGW). Residues Glu301 and Glu374 each carry the 5-glutamyl glycerylphosphorylethanolamine modification.

Belongs to the TRAFAC class translation factor GTPase superfamily. Classic translation factor GTPase family. EF-Tu/EF-1A subfamily.

The protein resides in the cytoplasm. It catalyses the reaction GTP + H2O = GDP + phosphate + H(+). Its function is as follows. Translation elongation factor that catalyzes the GTP-dependent binding of aminoacyl-tRNA (aa-tRNA) to the A-site of ribosomes during the elongation phase of protein synthesis. Base pairing between the mRNA codon and the aa-tRNA anticodon promotes GTP hydrolysis, releasing the aa-tRNA from EEF1A1 and allowing its accommodation into the ribosome. The growing protein chain is subsequently transferred from the P-site peptidyl tRNA to the A-site aa-tRNA, extending it by one amino acid through ribosome-catalyzed peptide bond formation. This Oryzias latipes (Japanese rice fish) protein is Elongation factor 1-alpha (eef1a).